A 157-amino-acid chain; its full sequence is Large ribosomal subunit protein uL10 (157 aa).

The protein belongs to the universal ribosomal protein uL10 family. Part of the ribosomal stalk of the 50S ribosomal subunit. The N-terminus interacts with L11 and the large rRNA to form the base of the stalk. The C-terminus forms an elongated spine to which L12 dimers bind in a sequential fashion forming a multimeric L10(L12)X complex.

Its function is as follows. Forms part of the ribosomal stalk, playing a central role in the interaction of the ribosome with GTP-bound translation factors. The polypeptide is Large ribosomal subunit protein uL10 (Campylobacter hominis (strain ATCC BAA-381 / DSM 21671 / CCUG 45161 / LMG 19568 / NCTC 13146 / CH001A)).